A 434-amino-acid chain; its full sequence is Adenylosuccinate synthetase (434 aa).

Residues 22–28 and 50–52 contribute to the GTP site; these read GDEGKGK and GHT. The active-site Proton acceptor is the Asp-23. Mg(2+)-binding residues include Asp-23 and Gly-50. Residues 23 to 26, 48 to 51, Thr-139, Arg-153, Gln-234, Thr-249, and Arg-313 each bind IMP; these read DEGK and NAGH. Catalysis depends on His-51, which acts as the Proton donor. 309–315 is a substrate binding site; the sequence is ATTGRKR. Residues Arg-315, 341–343, and 423–425 contribute to the GTP site; these read KLD and SVG.

Belongs to the adenylosuccinate synthetase family. Homodimer. Mg(2+) serves as cofactor.

The protein localises to the cytoplasm. It carries out the reaction IMP + L-aspartate + GTP = N(6)-(1,2-dicarboxyethyl)-AMP + GDP + phosphate + 2 H(+). It functions in the pathway purine metabolism; AMP biosynthesis via de novo pathway; AMP from IMP: step 1/2. Its function is as follows. Plays an important role in the de novo pathway of purine nucleotide biosynthesis. Catalyzes the first committed step in the biosynthesis of AMP from IMP. The protein is Adenylosuccinate synthetase of Pelodictyon phaeoclathratiforme (strain DSM 5477 / BU-1).